Here is a 430-residue protein sequence, read N- to C-terminus: 3-phosphoshikimate 1-carboxyvinyltransferase (430 aa).

Residues Lys23, Ser24, and Arg28 each coordinate 3-phosphoshikimate. Phosphoenolpyruvate is bound at residue Lys23. Residues Gly95 and Arg123 each contribute to the phosphoenolpyruvate site. 4 residues coordinate 3-phosphoshikimate: Ser169, Gln171, Asp315, and Lys342. Phosphoenolpyruvate is bound at residue Gln171. Asp315 (proton acceptor) is an active-site residue. Residues Arg346 and Arg388 each contribute to the phosphoenolpyruvate site.

The protein belongs to the EPSP synthase family. Monomer.

It localises to the cytoplasm. It carries out the reaction 3-phosphoshikimate + phosphoenolpyruvate = 5-O-(1-carboxyvinyl)-3-phosphoshikimate + phosphate. The protein operates within metabolic intermediate biosynthesis; chorismate biosynthesis; chorismate from D-erythrose 4-phosphate and phosphoenolpyruvate: step 6/7. Catalyzes the transfer of the enolpyruvyl moiety of phosphoenolpyruvate (PEP) to the 5-hydroxyl of shikimate-3-phosphate (S3P) to produce enolpyruvyl shikimate-3-phosphate and inorganic phosphate. In Streptococcus pyogenes serotype M6 (strain ATCC BAA-946 / MGAS10394), this protein is 3-phosphoshikimate 1-carboxyvinyltransferase.